The following is a 411-amino-acid chain: Phospholipase A1-II 6 (411 aa).

Serine 226 functions as the Acyl-ester intermediate in the catalytic mechanism. Catalysis depends on charge relay system residues serine 226, aspartate 296, and histidine 334.

This sequence belongs to the AB hydrolase superfamily. Lipase family.

It localises to the cytoplasm. Acylhydrolase that catalyzes the hydrolysis of phospholipids at the sn-1 position. The protein is Phospholipase A1-II 6 of Oryza sativa subsp. japonica (Rice).